Consider the following 439-residue polypeptide: Sodium-dependent phosphate transport protein 3 (439 aa).

N-linked (GlcNAc...) asparagine glycosylation is found at Asn-47, Asn-56, Asn-68, and Asn-69. A run of 9 helical transmembrane segments spans residues 98 to 118, 130 to 150, 183 to 203, 211 to 231, 273 to 293, 317 to 337, 350 to 369, 374 to 396, and 415 to 435; these read INYGIILTLIPSGYLAGIFGA, SLLTLFTPLAADFGVILVIMV, TIAGSGSAFGSFIILCVGGLI, FIFYIFGSTGCVCCLLWFTVI, LPLWAIFLGFFSHFWLCTIIL, LPFIAAASCTILGGQLADFLL, LFSSLGLLLPSICAVALPFV, VITIILLILIPGTSNLCDSGFII, and GFGLIAGIISSTATGFLISQV.

The protein belongs to the major facilitator superfamily. Sodium/anion cotransporter family. Expressed in the small intestine, kidney, spleen and testis. Not detected in fetal brain, bone marrow, and mammary gland.

The protein localises to the apical cell membrane. It catalyses the reaction 3 Na(+)(out) + phosphate(out) = 3 Na(+)(in) + phosphate(in). The catalysed reaction is urate(out) + n chloride(in) = urate(in) + n chloride(out). Acts as a membrane potential-dependent organic anion transporter, the transport requires a low concentration of chloride ions. Mediates chloride-dependent transport of urate. Can actively transport inorganic phosphate into cells via Na(+) cotransport. The chain is Sodium-dependent phosphate transport protein 3 (SLC17A2) from Homo sapiens (Human).